A 204-amino-acid chain; its full sequence is Dihydroorotase (204 aa).

H34 provides a ligand contact to Zn(2+). A substrate-binding site is contributed by L79. Residue D107 coordinates Zn(2+). D107 is an active-site residue. Positions 111 and 123 each coordinate substrate.

The protein belongs to the metallo-dependent hydrolases superfamily. DHOase family. Class II DHOase subfamily. Homodimer. Zn(2+) serves as cofactor.

The catalysed reaction is (S)-dihydroorotate + H2O = N-carbamoyl-L-aspartate + H(+). The protein operates within pyrimidine metabolism; UMP biosynthesis via de novo pathway; (S)-dihydroorotate from bicarbonate: step 3/3. Functionally, catalyzes the reversible cyclization of carbamoyl aspartate to dihydroorotate. The polypeptide is Dihydroorotase (Serratia marcescens).